The primary structure comprises 785 residues: Tripartite terminase subunit 1 (785 aa).

Residues 197 to 225 (CAVCFEELCVTANQGATIARRLADRICNH) form a C3H1-type zinc finger. 2 disordered regions span residues 433 to 452 (GGAADAPKGGAGPDDDGDRV) and 457 to 489 (GARGLGAPGGGGEDEDRRRGPGGQGPETWGDIA). 696 to 703 (FASVYRCG) is an ATP binding site.

The protein belongs to the herpesviridae TRM1 protein family. Associates with TRM2 and TRM3 to form the tripartite terminase complex. Interacts with portal protein.

The protein resides in the host nucleus. Component of the molecular motor that translocates viral genomic DNA in empty capsid during DNA packaging. Forms a tripartite terminase complex together with TRM2 and TRM3 in the host cytoplasm. Once the complex reaches the host nucleus, it interacts with the capsid portal vertex. This portal forms a ring in which genomic DNA is translocated into the capsid. TRM1 carries an endonuclease activity that plays an important role for the cleavage of concatemeric viral DNA into unit length genomes. This chain is Tripartite terminase subunit 1, found in Human herpesvirus 1 (strain 17) (HHV-1).